Here is a 681-residue protein sequence, read N- to C-terminus: Envelope glycoprotein (681 aa).

The N-terminal stretch at 1 to 18 (MKTIYFLISLILIQSIKT) is a signal peptide. Residues 19 to 648 (LPVLEIASNS…GLGGKWWTSD (630 aa)) are Extracellular-facing. A receptor-binding region spans residues 38–188 (SGTLQKTEDV…FSRQGQGYRH (151 aa)). N-linked (GlcNAc...) asparagine; by host glycans are attached at residues asparagine 94, asparagine 171, asparagine 190, asparagine 202, asparagine 207, asparagine 219, and asparagine 223. The interval 223–428 (NQTCPPSLKP…PDSSPTTRPP (206 aa)) is disordered. Composition is skewed to polar residues over residues 236-260 (PTVT…MNPS) and 278-315 (PHTT…TNPS). A mucin-like region region spans residues 277-455 (GPHTTLNVVT…PFLDGLINTE (179 aa)). Asparagine 310, asparagine 323, asparagine 336, asparagine 350, asparagine 360, asparagine 364, asparagine 381, asparagine 397, asparagine 475, and asparagine 487 each carry an N-linked (GlcNAc...) asparagine; by host glycan. The segment covering 327–347 (PTTQPATLLNNTNTTPTYNTL) has biased composition (low complexity). Composition is skewed to polar residues over residues 348 to 365 (KYNL…TNND) and 373 to 394 (SEQT…TTGQ). Over residues 395–428 (DTNSTTNIIMTTSDITSKHPTNSSPDSSPTTRPP) the composition is skewed to low complexity. A fusion peptide region spans residues 529–549 (GLSWIPFFGPGIEGLYTAGLI). N-linked (GlcNAc...) asparagine; by host glycosylation is found at asparagine 564 and asparagine 619. Residues 649–669 (WGVLTNLGILLLLSIAVLIAL) form a helical membrane-spanning segment. The Cytoplasmic segment spans residues 670 to 681 (SCICRIFTKYIG). Residues cysteine 671 and cysteine 673 are each lipidated (S-palmitoyl cysteine; by host).

This sequence belongs to the filoviruses glycoprotein family. As to quaternary structure, homotrimer; each monomer consists of a GP1 and a GP2 subunit linked by disulfide bonds. The resulting peplomers (GP1,2) protrude from the virus surface as spikes. GP1,2 interacts with human CD209 and CLEC4M (collectively referred to as DC-SIGN(R)). Asialoglycoprotein receptor (ASGP-R) may be a liver-specific receptor for GP1,2. Members of the Tyro3 receptor tyrosine kinase family may be cell entry factors interacting with GP1,2. In terms of processing, N-glycosylated. O-glycosylated in the mucin-like region. Post-translationally, specific enzymatic cleavages in vivo yield mature proteins. The precursor is processed into GP1 and GP2 by host cell furin in the trans Golgi, and maybe by other host proteases, to yield the mature GP1 and GP2 proteins. The cleavage site corresponds to the furin optimal cleavage sequence [KR]-X-[KR]-R. In terms of processing, GP1 is phosphorylated on serine residues between residues 260 and 273.

It localises to the virion membrane. The protein localises to the host cell membrane. Functionally, GP1 is responsible for binding to the receptor(s) on target cells. Interacts with CD209/DC-SIGN and CLEC4M/DC-SIGNR which act as cofactors for virus entry into the host cell. Binding to CD209 and CLEC4M, which are respectively found on dendritic cells (DCs), and on endothelial cells of liver sinusoids and lymph node sinuses, facilitate infection of macrophages and endothelial cells. These interactions not only facilitate virus cell entry, but also allow capture of viral particles by DCs and subsequent transmission to susceptible cells without DCs infection (trans infection). GP2 acts as a class I viral fusion protein. Under the current model, the protein has at least 3 conformational states: pre-fusion native state, pre-hairpin intermediate state, and post-fusion hairpin state. During viral and target cell membrane fusion, the coiled coil regions (heptad repeats) assume a trimer-of-hairpins structure, positioning the fusion peptide in close proximity to the C-terminal region of the ectodomain. The formation of this structure appears to drive apposition and subsequent fusion of viral and target cell membranes. Responsible for penetration of the virus into the cell cytoplasm by mediating the fusion of the membrane of the endocytosed virus particle with the endosomal membrane. Low pH in endosomes induces an irreversible conformational change in GP2, releasing the fusion hydrophobic peptide. This chain is Envelope glycoprotein (GP), found in Chlorocebus aethiops (Green monkey).